A 177-amino-acid chain; its full sequence is Nucleoside-triphosphatase THEP1 (177 aa).

ATP is bound by residues 10–17 (GKPGIGKT) and 101–108 (CLVIDEIG).

It belongs to the THEP1 NTPase family.

It carries out the reaction a ribonucleoside 5'-triphosphate + H2O = a ribonucleoside 5'-diphosphate + phosphate + H(+). In terms of biological role, has nucleotide phosphatase activity towards ATP, GTP, CTP, TTP and UTP. May hydrolyze nucleoside diphosphates with lower efficiency. This chain is Nucleoside-triphosphatase THEP1, found in Natranaerobius thermophilus (strain ATCC BAA-1301 / DSM 18059 / JW/NM-WN-LF).